The sequence spans 166 residues: Probable chemoreceptor glutamine deamidase CheD 1 (166 aa).

This sequence belongs to the CheD family.

It carries out the reaction L-glutaminyl-[protein] + H2O = L-glutamyl-[protein] + NH4(+). In terms of biological role, probably deamidates glutamine residues to glutamate on methyl-accepting chemotaxis receptors (MCPs), playing an important role in chemotaxis. The protein is Probable chemoreceptor glutamine deamidase CheD 1 of Leptospira interrogans serogroup Icterohaemorrhagiae serovar copenhageni (strain Fiocruz L1-130).